A 298-amino-acid polypeptide reads, in one-letter code: Bifunctional protein FolD (298 aa).

NADP(+)-binding positions include 166–168 (GRS), Ser191, and Ile232.

The protein belongs to the tetrahydrofolate dehydrogenase/cyclohydrolase family. In terms of assembly, homodimer.

The catalysed reaction is (6R)-5,10-methylene-5,6,7,8-tetrahydrofolate + NADP(+) = (6R)-5,10-methenyltetrahydrofolate + NADPH. It carries out the reaction (6R)-5,10-methenyltetrahydrofolate + H2O = (6R)-10-formyltetrahydrofolate + H(+). The protein operates within one-carbon metabolism; tetrahydrofolate interconversion. Functionally, catalyzes the oxidation of 5,10-methylenetetrahydrofolate to 5,10-methenyltetrahydrofolate and then the hydrolysis of 5,10-methenyltetrahydrofolate to 10-formyltetrahydrofolate. This chain is Bifunctional protein FolD, found in Erythrobacter litoralis (strain HTCC2594).